Here is a 207-residue protein sequence, read N- to C-terminus: Large ribosomal subunit protein uL4 (207 aa).

The segment at 50 to 75 (KTKTVSEVSGTTKKPFKQKGTGNARQ) is disordered.

This sequence belongs to the universal ribosomal protein uL4 family. As to quaternary structure, part of the 50S ribosomal subunit.

Its function is as follows. One of the primary rRNA binding proteins, this protein initially binds near the 5'-end of the 23S rRNA. It is important during the early stages of 50S assembly. It makes multiple contacts with different domains of the 23S rRNA in the assembled 50S subunit and ribosome. Functionally, forms part of the polypeptide exit tunnel. The sequence is that of Large ribosomal subunit protein uL4 from Rickettsia felis (strain ATCC VR-1525 / URRWXCal2) (Rickettsia azadi).